The sequence spans 144 residues: Large ribosomal subunit protein uL16 (144 aa).

The segment covering 1 to 16 (MLVPKRVKHRKVQRGK) has biased composition (basic residues). The segment at 1–20 (MLVPKRVKHRKVQRGKMRGE) is disordered.

The protein belongs to the universal ribosomal protein uL16 family. As to quaternary structure, part of the 50S ribosomal subunit.

Binds 23S rRNA and is also seen to make contacts with the A and possibly P site tRNAs. The chain is Large ribosomal subunit protein uL16 from Limosilactobacillus fermentum (strain NBRC 3956 / LMG 18251) (Lactobacillus fermentum).